Here is a 392-residue protein sequence, read N- to C-terminus: Succinate--CoA ligase [ADP-forming] subunit beta (392 aa).

One can recognise an ATP-grasp domain in the interval 9–236 (RDLFERHGLP…QAAVDPLEQA (228 aa)). ATP contacts are provided by residues K45, 52-54 (GRG), A94, and E99. 2 residues coordinate Mg(2+): N191 and D205. Substrate contacts are provided by residues N256 and 318–320 (GIT).

It belongs to the succinate/malate CoA ligase beta subunit family. In terms of assembly, heterotetramer of two alpha and two beta subunits. The cofactor is Mg(2+).

It carries out the reaction succinate + ATP + CoA = succinyl-CoA + ADP + phosphate. The enzyme catalyses GTP + succinate + CoA = succinyl-CoA + GDP + phosphate. The protein operates within carbohydrate metabolism; tricarboxylic acid cycle; succinate from succinyl-CoA (ligase route): step 1/1. In terms of biological role, succinyl-CoA synthetase functions in the citric acid cycle (TCA), coupling the hydrolysis of succinyl-CoA to the synthesis of either ATP or GTP and thus represents the only step of substrate-level phosphorylation in the TCA. The beta subunit provides nucleotide specificity of the enzyme and binds the substrate succinate, while the binding sites for coenzyme A and phosphate are found in the alpha subunit. The polypeptide is Succinate--CoA ligase [ADP-forming] subunit beta (Salinispora arenicola (strain CNS-205)).